A 943-amino-acid polypeptide reads, in one-letter code: UvrABC system protein A (943 aa).

ATP is bound at residue 31 to 38 (GLSGSGKS). A C4-type zinc finger spans residues 253–280 (CPHCGYSVPELEPRLFSFNNPAGACPTC). ABC transporter domains lie at 310 to 587 (WDRR…PNSI) and 607 to 937 (LDKK…RFLK). 640–647 (GVSGSGKS) is an ATP binding site. The segment at 740–766 (CEACQGDGVLKVEMHFLPDVYVPCDQC) adopts a C4-type zinc-finger fold.

This sequence belongs to the ABC transporter superfamily. UvrA family. Forms a heterotetramer with UvrB during the search for lesions.

The protein localises to the cytoplasm. Functionally, the UvrABC repair system catalyzes the recognition and processing of DNA lesions. UvrA is an ATPase and a DNA-binding protein. A damage recognition complex composed of 2 UvrA and 2 UvrB subunits scans DNA for abnormalities. When the presence of a lesion has been verified by UvrB, the UvrA molecules dissociate. This chain is UvrABC system protein A, found in Haemophilus influenzae (strain ATCC 51907 / DSM 11121 / KW20 / Rd).